The sequence spans 947 residues: Protein translocase subunit SecA (947 aa).

Residues Gln87, 105–109 (GEGKT), and Asp494 contribute to the ATP site. Residues 860 to 947 (TAPKPLPTQE…NRAPKSKRKR (88 aa)) form a disordered region. Residues 870-885 (AAARTTGTAAPTALRA) show a composition bias toward low complexity. 2 stretches are compositionally biased toward basic and acidic residues: residues 903–914 (EDGKAKATRDSA) and 922–931 (ASRRERREAA).

The protein belongs to the SecA family. As to quaternary structure, monomer and homodimer. Part of the essential Sec protein translocation apparatus which comprises SecA, SecYEG and auxiliary proteins SecDF. Other proteins may also be involved.

It localises to the cell membrane. Its subcellular location is the cytoplasm. The catalysed reaction is ATP + H2O + cellular proteinSide 1 = ADP + phosphate + cellular proteinSide 2.. Its function is as follows. Part of the Sec protein translocase complex. Interacts with the SecYEG preprotein conducting channel. Has a central role in coupling the hydrolysis of ATP to the transfer of proteins into and across the cell membrane, serving as an ATP-driven molecular motor driving the stepwise translocation of polypeptide chains across the membrane. The sequence is that of Protein translocase subunit SecA from Rhodococcus erythropolis (strain PR4 / NBRC 100887).